The primary structure comprises 131 residues: Protein Turandot M (131 aa).

The N-terminal stretch at 1 to 23 is a signal peptide; that stretch reads MNPTIYLSCLMVFSVFLLGKVNA.

Belongs to the Turandot family.

It is found in the secreted. Functionally, a humoral factor that may play a role in stress tolerance. Requires Mekk1 expression in the fat body to regulate response to septic injury and consequent immune response. This Drosophila melanogaster (Fruit fly) protein is Protein Turandot M.